We begin with the raw amino-acid sequence, 484 residues long: MTRMVMLQGTGSDVGKTVLVAGLCRLARLHGRVVRPFKPQNMSNNAAVADDGGEIGRAQWLQALACGVPSSVHMNPVLLKPQSETGSQIIVQGRVFGQAKGRDYQRLKPQLLGAVLDSFEELKAGADLVIVEGAGSPAEINLRAGDIANMGFATRANVPVVLVGDIDRGGVIASLVGTHAILPEEDRRMISGYIINKFRGDQSLFADGIGAITQYTGWPSFGIVPWLKAAGRLPPEDSVALERLSRSSTGALKIAVPVLSRIANFDDFDPLASEPSVDLVYVRPGEPLPADAALVILPGSKATIGDLADLRAQGWDKDLTLHRRRGGRIIGICGGYQMLGNSVADPLGLEGAPCRVEGLGLLEIDTEMAPEKTVRNSAAHSLEYDMALSGYEIHLGQTDGPDCQRPALTIRGRADGAISADGKVMGTYLHGLFGNDEYRAALLQSFGISNGTVNYRQSVEQALDDLARELESVLDKAWLDQLIG.

Positions 251-438 (ALKIAVPVLS…LHGLFGNDEY (188 aa)) constitute a GATase cobBQ-type domain. Cysteine 333 serves as the catalytic Nucleophile. Histidine 430 is a catalytic residue.

This sequence belongs to the CobB/CobQ family. CobQ subfamily.

It functions in the pathway cofactor biosynthesis; adenosylcobalamin biosynthesis. In terms of biological role, catalyzes amidations at positions B, D, E, and G on adenosylcobyrinic A,C-diamide. NH(2) groups are provided by glutamine, and one molecule of ATP is hydrogenolyzed for each amidation. The protein is Cobyric acid synthase of Allorhizobium ampelinum (strain ATCC BAA-846 / DSM 112012 / S4) (Agrobacterium vitis (strain S4)).